We begin with the raw amino-acid sequence, 154 residues long: UPF0178 protein RC1_2062 (154 aa).

Belongs to the UPF0178 family.

This is UPF0178 protein RC1_2062 from Rhodospirillum centenum (strain ATCC 51521 / SW).